We begin with the raw amino-acid sequence, 440 residues long: Tuliposide B-converting enzyme 1, amyloplastic (440 aa).

The N-terminal 58 residues, 1-58 (MSIVSFCSSLPAGPHGFKHGRGTRDMVHMPCIVRRTARSPAQACRLLRWNKYHCAAVP), are a transit peptide targeting the amyloplast. The Acyl-ester intermediate role is filled by S232. Catalysis depends on charge relay system residues D325 and H357.

Belongs to the AB hydrolase superfamily. As to quaternary structure, homodimer. Post-translationally, not glycosylated. In terms of tissue distribution, expressed in the pollen grains.

Its subcellular location is the plastid. The protein resides in the amyloplast. It catalyses the reaction 6-tuliposide B = tulipalin B + D-glucose. Inhibited by Ag(+), Cu(2+), Fe(2+), Hg(2+), V(3+) and phenylmethylsulfonyl fluoride (PMSF). In terms of biological role, lactone-forming carboxylesterase, specifically catalyzing intramolecular transesterification, but not hydrolysis. Involved in the biosynthesis of tulipalins, defensive chemicals that show antimicrobial activities against a broad range of strains of bacteria and fungi. Substrates are 6-tuliposide B &gt; 6-tuliposide A. The protein is Tuliposide B-converting enzyme 1, amyloplastic of Tulipa gesneriana (Garden tulip).